A 439-amino-acid chain; its full sequence is Protein translocase subunit SecY (439 aa).

10 helical membrane passes run 23–43, 77–97, 125–145, 154–174, 187–207, 217–237, 274–294, 317–337, 369–389, and 397–417; these read IASV…PIPG, IFAL…LLTL, LVLA…ISGM, FYFY…LMWL, ISII…VHTI, ILLF…VVFI, VIPA…ISWF, YLIL…GLVF, IMIR…LIPE, and VPFY…MDFI.

Belongs to the SecY/SEC61-alpha family. As to quaternary structure, component of the Sec protein translocase complex. Heterotrimer consisting of SecY, SecE and SecG subunits. The heterotrimers can form oligomers, although 1 heterotrimer is thought to be able to translocate proteins. Interacts with the ribosome. Interacts with SecDF, and other proteins may be involved. Interacts with SecA.

The protein localises to the cell membrane. In terms of biological role, the central subunit of the protein translocation channel SecYEG. Consists of two halves formed by TMs 1-5 and 6-10. These two domains form a lateral gate at the front which open onto the bilayer between TMs 2 and 7, and are clamped together by SecE at the back. The channel is closed by both a pore ring composed of hydrophobic SecY resides and a short helix (helix 2A) on the extracellular side of the membrane which forms a plug. The plug probably moves laterally to allow the channel to open. The ring and the pore may move independently. This is Protein translocase subunit SecY from Buchnera aphidicola subsp. Schizaphis graminum (strain Sg).